A 50-amino-acid polypeptide reads, in one-letter code: U37-theraphotoxin-Cg1a (50 aa).

A signal peptide spans 1 to 19; the sequence is MRVLLIIAGLALLSVVCYT.

This sequence belongs to the neurotoxin 10 (Hwtx-1) family. 67 (Jztx-67) subfamily. As to expression, expressed by the venom gland.

Its subcellular location is the secreted. This chain is U37-theraphotoxin-Cg1a, found in Chilobrachys guangxiensis (Chinese earth tiger tarantula).